Consider the following 451-residue polypeptide: MSEKVEKEIGEQITKLDLSEYRSIELSKLSKENIGQKIRTFGWVANVRSQSTITFIELYAHYRTVKCVYQKKMHLTMCTSMTVYGTVSKNFGKKDAHEFEIQVEGVEIYNGAIAPSFPLNEDSSVNAILTNGHLGLRTKKRQLFLKARGHLLKIIRDFYFEGEYTEVTPPTMVQTQVEGGSTLFKLDYYGEDAYLTQSSQLYLETVVPASHRAYCIMPSYRAEKSRTRRHLSEYTHVEAEMADIDLDGLISSIEALVSYSMRRFYEEMKSDILSVFPEFEFHKVPRTPFKRIKYSEAIELLKSKGYKKEDNTDFELGDDIPDAAERYLVEVVGDGCPVFLTHFLVGHKPFYMRKDENDKGLTESTDLLFPGIGEILGGSMRQDTYEDLIEGFRRENINIDPYYWYLDMARFGPCKHGGYGLGFERFLMGLMRYESVDEATLYPRKVSRCQP.

The protein belongs to the class-II aminoacyl-tRNA synthetase family.

The protein localises to the cytoplasm. It catalyses the reaction tRNA(Asn) + L-asparagine + ATP = L-asparaginyl-tRNA(Asn) + AMP + diphosphate + H(+). This Encephalitozoon cuniculi (strain GB-M1) (Microsporidian parasite) protein is Probable asparagine--tRNA ligase, cytoplasmic.